An 816-amino-acid polypeptide reads, in one-letter code: uncharacterized protein (816 aa).

Disordered regions lie at residues 1 to 34, 65 to 101, 154 to 406, and 770 to 816; these read MLFN…QQES, RQNN…GYKN, DEKD…ENPE, and RQHK…VMYA. Over residues 18 to 32 the composition is skewed to low complexity; sequence NQSSANTQNQQAHQQ. The span at 83–92 shows a compositional bias: polar residues; sequence VSATSAYSKQ. Low complexity predominate over residues 161 to 223; that stretch reads TTTSSSTSTS…STSTTSTSTT (63 aa). Over residues 246 to 260 the composition is skewed to polar residues; sequence ESTSIGKGTADSAQI. Serine 286 is modified (phosphoserine). Basic and acidic residues predominate over residues 292–316; the sequence is DEQKEEKSDVKKVNPPSGEEKKEVE. The segment covering 317–326 has biased composition (acidic residues); that stretch reads AEGDAEEETE. Over residues 327–342 the composition is skewed to low complexity; sequence QSSAEESAERTSTPET. 2 positions are modified to phosphoserine: serine 343 and serine 347. Positions 343–353 are enriched in acidic residues; the sequence is SEPESEEDESP. The segment covering 380–396 has biased composition (low complexity); it reads KSPTSSSTQKSKTAAPS. 2 stretches are compositionally biased toward basic and acidic residues: residues 770-792 and 799-816; these read RQHK…DRSQ and PKDD…VMYA. Threonine 809 carries the post-translational modification Phosphothreonine.

In terms of processing, pyrophosphorylated by 5-diphosphoinositol pentakisphosphate (5-IP7). Serine pyrophosphorylation is achieved by Mg(2+)-dependent, but enzyme independent transfer of a beta-phosphate from a inositol pyrophosphate to a pre-phosphorylated serine residue.

This is an uncharacterized protein from Saccharomyces cerevisiae (strain ATCC 204508 / S288c) (Baker's yeast).